The primary structure comprises 473 residues: Cysteine--tRNA ligase (473 aa).

Residue cysteine 28 participates in Zn(2+) binding. The 'HIGH' region motif lies at 30–40 (MTVYDYCHLGH). The Zn(2+) site is built by cysteine 209, histidine 234, and glutamate 238. Positions 282–286 (KMSKS) match the 'KMSKS' region motif. Lysine 285 provides a ligand contact to ATP.

It belongs to the class-I aminoacyl-tRNA synthetase family. In terms of assembly, monomer. The cofactor is Zn(2+).

The protein resides in the cytoplasm. The catalysed reaction is tRNA(Cys) + L-cysteine + ATP = L-cysteinyl-tRNA(Cys) + AMP + diphosphate. This is Cysteine--tRNA ligase from Neisseria meningitidis serogroup B (strain ATCC BAA-335 / MC58).